The primary structure comprises 639 residues: Protein P1 (639 aa).

The N-terminal stretch at 1 to 20 is a signal peptide; that stretch reads MNRFTAYAALFFMFSLCSTA. 3 helical membrane passes run 121-141, 144-164, and 172-192; these read AASV…WTLA, ITLF…LGCI, and ALSL…KIIW. Residues 207–399 enclose the Peptidase S39 domain; sequence VEGYKGFSVP…GITSPNYVFE (193 aa). Residues His255, Asp286, and Ser354 each act as for protease activity in the active site. 2 disordered regions span residues 455-515 and 539-639; these read ATNA…PPMD and VSRV…NSKA. Over residues 463–488 the composition is skewed to polar residues; sequence TAQTNSAEKTAPSTSAEKTALTNKPL. A compositionally biased stretch (basic residues) spans 548–561; that stretch reads QKPKQKKRGRRGGK. The span at 566 to 577 shows a compositional bias: polar residues; sequence SLPPTSTQSTSG. Residues 587–602 show a composition bias toward low complexity; sequence ASGSAGTSRATTTPAP.

This sequence belongs to the peptidase S39B family. Post-translationally, specific enzymatic cleavages in vivo yield mature proteins. The protease probably cleaves itself and releases the VPg protein. The VPg protein is probably further cleaved in its C-terminus.

It localises to the membrane. In terms of biological role, precursor from which the VPg molecule is probably released at the onset of the RNA synthesis. Essential for virus replication. Participates, together with the proteins P0 and P7, in the inhibition of the induction of aphid-induced host phytohormones. This could play a role in the attraction to the infected plants by aphids. This is Protein P1 from Solanum tuberosum (Potato).